A 391-amino-acid polypeptide reads, in one-letter code: Candidapepsin-1 (391 aa).

The signal sequence occupies residues 1–18 (MFLKNIFIALAIALLVDA). The propeptide at 19–50 (SPAKRSPGFVTLDFDVIKTPVNATGQEGKVKR) is activation peptide. N-linked (GlcNAc...) asparagine glycosylation is present at Asn40. In terms of domain architecture, Peptidase A1 spans 64–377 (YAADITIGSN…DLDDDKISLA (314 aa)). Asp82 is a catalytic residue. An intrachain disulfide couples Cys97 to Cys109. The active site involves Asp267. A disulfide bond links Cys305 and Cys343.

This sequence belongs to the peptidase A1 family. Post-translationally, O-glycosylated.

The protein resides in the secreted. The enzyme catalyses Preferential cleavage at the carboxyl of hydrophobic amino acids, but fails to cleave 15-Leu-|-Tyr-16, 16-Tyr-|-Leu-17 and 24-Phe-|-Phe-25 of insulin B chain. Activates trypsinogen, and degrades keratin.. The polypeptide is Candidapepsin-1 (SAP1) (Candida albicans (strain WO-1) (Yeast)).